Here is a 664-residue protein sequence, read N- to C-terminus: ATP-dependent RNA helicase MSS116, mitochondrial (664 aa).

The N-terminal 26 residues, 1 to 26 (MLTSILIKGRTPVLASRNLLAALSNC), are a transit peptide targeting the mitochondrion. Residues 42–79 (NRDQRNFGRNQRNNNSNRYRNSRFNSRPRTRSREDDDE) are disordered. Residues 48–68 (FGRNQRNNNSNRYRNSRFNSR) show a composition bias toward low complexity. The short motif at 106–134 (SLLEEGVLDKEIHKAITRMEFPGLTPVQQ) is the Q motif element. Positions 139–326 (PILSSEDHDV…NNIMNKKECL (188 aa)) constitute a Helicase ATP-binding domain. Residue 152–159 (AKTGTGKT) coordinates ATP. The DEAD box signature appears at 267 to 270 (DEAD). Positions 355 to 512 (SIFAAVEHIK…EKYEPSEEIK (158 aa)) constitute a Helicase C-terminal domain. The disordered stretch occupies residues 602-664 (GNNKSYDYDD…NYSSRNSNIY (63 aa)). Over residues 628 to 638 (QNRDYDDEPFR) the composition is skewed to basic and acidic residues. Over residues 639 to 649 (RSNNNRRSFSR) the composition is skewed to low complexity. The span at 653–664 (KNNYSSRNSNIY) shows a compositional bias: polar residues.

This sequence belongs to the DEAD box helicase family. DDX18/HAS1 subfamily.

It is found in the mitochondrion matrix. It catalyses the reaction ATP + H2O = ADP + phosphate + H(+). Functionally, ATP-dependent RNA helicase required for mitochondrial splicing of group I and II introns. Specifically involved in the ATP-dependent splicing of the bl1 intron of COB. Also required for efficient mitochondrial translation. This chain is ATP-dependent RNA helicase MSS116, mitochondrial (MSS116), found in Saccharomyces cerevisiae (strain ATCC 204508 / S288c) (Baker's yeast).